We begin with the raw amino-acid sequence, 463 residues long: Exodeoxyribonuclease 7 large subunit (463 aa).

This sequence belongs to the XseA family. Heterooligomer composed of large and small subunits.

It is found in the cytoplasm. It carries out the reaction Exonucleolytic cleavage in either 5'- to 3'- or 3'- to 5'-direction to yield nucleoside 5'-phosphates.. Bidirectionally degrades single-stranded DNA into large acid-insoluble oligonucleotides, which are then degraded further into small acid-soluble oligonucleotides. The sequence is that of Exodeoxyribonuclease 7 large subunit from Klebsiella pneumoniae subsp. pneumoniae (strain ATCC 700721 / MGH 78578).